The following is a 468-amino-acid chain: uncharacterized protein (468 aa).

A disordered region spans residues 447 to 468 (AVHVSNGDKPKVALPDTQLGSH).

Belongs to the mycobacterial PPE family.

This is an uncharacterized protein from Mycobacterium tuberculosis (strain ATCC 25618 / H37Rv).